We begin with the raw amino-acid sequence, 529 residues long: Peptide chain release factor 3 (529 aa).

The tr-type G domain maps to A11 to M280. GTP-binding positions include S20–T27, D88–H92, and N142–D145.

Belongs to the TRAFAC class translation factor GTPase superfamily. Classic translation factor GTPase family. PrfC subfamily.

It localises to the cytoplasm. Increases the formation of ribosomal termination complexes and stimulates activities of RF-1 and RF-2. It binds guanine nucleotides and has strong preference for UGA stop codons. It may interact directly with the ribosome. The stimulation of RF-1 and RF-2 is significantly reduced by GTP and GDP, but not by GMP. This is Peptide chain release factor 3 from Enterobacter sp. (strain 638).